A 377-amino-acid chain; its full sequence is Nitric oxide reductase FlRd-NAD(+) reductase (377 aa).

Belongs to the FAD-dependent oxidoreductase family. The cofactor is FAD.

The protein localises to the cytoplasm. The enzyme catalyses 2 reduced [nitric oxide reductase rubredoxin domain] + NAD(+) + H(+) = 2 oxidized [nitric oxide reductase rubredoxin domain] + NADH. Its pathway is nitrogen metabolism; nitric oxide reduction. Functionally, one of at least two accessory proteins for anaerobic nitric oxide (NO) reductase. Reduces the rubredoxin moiety of NO reductase. The protein is Nitric oxide reductase FlRd-NAD(+) reductase of Citrobacter koseri (strain ATCC BAA-895 / CDC 4225-83 / SGSC4696).